A 72-amino-acid chain; its full sequence is Translation initiation factor IF-1 (72 aa).

Positions 1-72 (MSKDDSIEFE…TKGRITYRMK (72 aa)) constitute an S1-like domain.

It belongs to the IF-1 family. As to quaternary structure, component of the 30S ribosomal translation pre-initiation complex which assembles on the 30S ribosome in the order IF-2 and IF-3, IF-1 and N-formylmethionyl-tRNA(fMet); mRNA recruitment can occur at any time during PIC assembly.

The protein resides in the cytoplasm. Its function is as follows. One of the essential components for the initiation of protein synthesis. Stabilizes the binding of IF-2 and IF-3 on the 30S subunit to which N-formylmethionyl-tRNA(fMet) subsequently binds. Helps modulate mRNA selection, yielding the 30S pre-initiation complex (PIC). Upon addition of the 50S ribosomal subunit IF-1, IF-2 and IF-3 are released leaving the mature 70S translation initiation complex. The polypeptide is Translation initiation factor IF-1 (Xanthomonas euvesicatoria pv. vesicatoria (strain 85-10) (Xanthomonas campestris pv. vesicatoria)).